A 1168-amino-acid chain; its full sequence is Myosin IC heavy chain (1168 aa).

The region spanning 7 to 666 (HGVDDMVMLT…SVFSLEELRD (660 aa)) is the Myosin motor domain. 101 to 108 (GESGAGKT) provides a ligand contact to ATP. Residue Ser311 is modified to Phosphoserine. Residues 542 to 564 (INILVATLSKCTPHYIRCIKPNE) are actin-binding. The TH1 domain maps to 704 to 892 (KERRRLSLER…KVSVAPGLPP (189 aa)). Disordered regions lie at residues 876–909 (DGKV…GGAS), 921–978 (ILGA…APGP), and 1036–1168 (AAAP…PPGM). Residues 895–909 (APNIQAPQETSGGAS) are compositionally biased toward polar residues. 2 stretches are compositionally biased toward gly residues: residues 924–939 (AKGG…GGPS) and 950–959 (PGGGGGGPSP). Residues 960-978 (FGGRPSPSGPPAAASAPGP) are compositionally biased toward low complexity. In terms of domain architecture, SH3 spans 976 to 1035 (PGPEQARALYDFAAENPDELTFNEGAVVTVINKSNPDWWEGELNGQRGVFPASYVELIPR). The span at 1040 to 1052 (APGPSGGPRPAPP) shows a compositional bias: pro residues. Composition is skewed to gly residues over residues 1063–1083 (GGPG…GRGG) and 1090–1099 (GRAGPPGGRG). Over residues 1100 to 1112 (MPAPGGAAPRGRG) the composition is skewed to low complexity. Gly residues predominate over residues 1120 to 1141 (GPPGGGRGGAPPPGGMRGRGGP). Positions 1152 to 1161 (GGMMPPRGRA) are enriched in low complexity.

Belongs to the TRAFAC class myosin-kinesin ATPase superfamily. Myosin family. As to quaternary structure, myosin I heavy chain is single-headed. Dimer of a heavy and a light chain. Inability to self-assemble into filaments.

Myosin is a protein that binds to F-actin and has ATPase activity that is activated by F-actin. This chain is Myosin IC heavy chain (MIC), found in Acanthamoeba castellanii (Amoeba).